A 347-amino-acid polypeptide reads, in one-letter code: Mitochondrial carrier protein rim2 (347 aa).

Solcar repeat units follow at residues 32 to 136, 146 to 234, and 256 to 345; these read PPPL…GKRI, ENSQ…FKHA, and LDWG…IMHF. 6 consecutive transmembrane segments (helical) span residues 38-58, 105-125, 152-172, 214-233, 262-282, and 317-338; these read FIAG…LDVV, TRAL…ARSI, LMAA…IWLV, SLLG…KFKH, LGGA…HEVV, and LYGG…LFGS.

Its subcellular location is the mitochondrion inner membrane. The enzyme catalyses 5-methyl-UTP(out) + UTP(in) = 5-methyl-UTP(in) + UTP(out). Mitochondrial transporter that imports/exports pyrimidine nucleotides into and from mitochondria. Selectively transports uridine, thymidine, and cytosine (deoxy)nucleoside di- and triphosphates by an antiport mechanism. Also transports, with lower efficiency, uridine, thymidine, and cytosine (deoxy)nucleoside monophosphates as well as guanosine (deoxy)nucleoside di- and triphosphate. May import (deoxy)nucleoside triphosphates in exchange for intramitochondrial (deoxy)nucleoside monophosphates, thus providing precursors necessary for de novo synthesis of mitochondrial DNA and RNA while exporting products of their catabolism. Mediates the transport of iron and other divalent metal ions like copper and zinc across the mitochondrial inner membrane in a pyrimidine nucleotide-dependent fashion. Catalyzes the co-import of pyrimidine nucleotides and divalent metal ions including ferrous iron. Participates in mitochondrial genome maintenance, regulation of mitochondrial membrane potential and mitochondrial respiration. The polypeptide is Mitochondrial carrier protein rim2 (rim2) (Schizosaccharomyces pombe (strain 972 / ATCC 24843) (Fission yeast)).